Reading from the N-terminus, the 238-residue chain is Ribonuclease PH (238 aa).

Phosphate-binding positions include Arg-86 and Gly-124–Arg-126.

The protein belongs to the RNase PH family. Homohexameric ring arranged as a trimer of dimers.

The enzyme catalyses tRNA(n+1) + phosphate = tRNA(n) + a ribonucleoside 5'-diphosphate. Functionally, phosphorolytic 3'-5' exoribonuclease that plays an important role in tRNA 3'-end maturation. Removes nucleotide residues following the 3'-CCA terminus of tRNAs; can also add nucleotides to the ends of RNA molecules by using nucleoside diphosphates as substrates, but this may not be physiologically important. Probably plays a role in initiation of 16S rRNA degradation (leading to ribosome degradation) during starvation. In Proteus mirabilis (strain HI4320), this protein is Ribonuclease PH.